An 83-amino-acid polypeptide reads, in one-letter code: Small ribosomal subunit protein uS17c (83 aa).

It belongs to the universal ribosomal protein uS17 family. As to quaternary structure, part of the 30S ribosomal subunit.

The protein localises to the plastid. Its subcellular location is the chloroplast. Functionally, one of the primary rRNA binding proteins, it binds specifically to the 5'-end of 16S ribosomal RNA. The chain is Small ribosomal subunit protein uS17c (rps17) from Porphyra purpurea (Red seaweed).